Reading from the N-terminus, the 108-residue chain is MAYQLYRNTTLGNSLQESLDELIQTQQITPQLALQVLLQFDKAINTALANRVRNRVNFKGSLNTYRFCDNVWTFVLNDVEFREVTDLVKVDKVKIVACDGKNTGNAAE.

Belongs to the TFIIA subunit 2 family. TFIIA is a heterodimer of the large unprocessed subunit 1 and a small subunit gamma. It was originally believed to be a heterotrimer of an alpha, a beta and a gamma subunit. Interacts with NCOA6 general coactivator. TFIIA forms a complex with TBP.

The protein localises to the nucleus. Its function is as follows. TFIIA is a component of the transcription machinery of RNA polymerase II and plays an important role in transcriptional activation. TFIIA in a complex with TBP mediates transcriptional activity. This Oncorhynchus mykiss (Rainbow trout) protein is Transcription initiation factor IIA subunit 2 (gtf2a2).